The chain runs to 266 residues: Diphthine synthase (266 aa).

Residues Leu9, Asp84, Val87, Ser112–Ile113, Leu169, Ala210, and His235 contribute to the S-adenosyl-L-methionine site.

It belongs to the diphthine synthase family. In terms of assembly, homodimer.

The catalysed reaction is 2-[(3S)-amino-3-carboxypropyl]-L-histidyl-[translation elongation factor 2] + 3 S-adenosyl-L-methionine = diphthine-[translation elongation factor 2] + 3 S-adenosyl-L-homocysteine + 3 H(+). The protein operates within protein modification; peptidyl-diphthamide biosynthesis. In terms of biological role, S-adenosyl-L-methionine-dependent methyltransferase that catalyzes the trimethylation of the amino group of the modified target histidine residue in translation elongation factor 2 (EF-2), to form an intermediate called diphthine. The three successive methylation reactions represent the second step of diphthamide biosynthesis. This chain is Diphthine synthase, found in Methanosarcina barkeri (strain Fusaro / DSM 804).